The chain runs to 484 residues: Sperm motility kinase 2B (484 aa).

Residues 8–256 enclose the Protein kinase domain; the sequence is YVMLETIGHG…VAEVMVHPWV (249 aa). ATP-binding positions include 14-22 and lysine 37; that span reads IGHGGCSKV. Catalysis depends on aspartate 127, which acts as the Proton acceptor. The UBA domain maps to 272 to 314; that stretch reads PLKPNPAIVKAMGYIGFQAQDIEDSLRQRKFNETMASYCLLKK. 2 stretches are compositionally biased toward polar residues: residues 356-373 and 422-434; these read PTSL…CGRS and SSDD…TSAS. Disordered stretches follow at residues 356–400 and 422–450; these read PTSL…TMDH and SSDD…RGIK.

This sequence belongs to the protein kinase superfamily. CAMK Ser/Thr protein kinase family. Smok subfamily. Testis-specific. Expressed in the testis from 22 days postpartum (22 dpp).

It catalyses the reaction L-seryl-[protein] + ATP = O-phospho-L-seryl-[protein] + ADP + H(+). The catalysed reaction is L-threonyl-[protein] + ATP = O-phospho-L-threonyl-[protein] + ADP + H(+). Functionally, may play a role in sperm motility, especially in the regulation of flagellar function. The polypeptide is Sperm motility kinase 2B (Mus musculus (Mouse)).